Reading from the N-terminus, the 174-residue chain is Gamma-crystallin A (174 aa).

2 consecutive Beta/gamma crystallin 'Greek key' domains span residues 2–40 (GKIT…RVDS) and 41–83 (GCWM…RSIP). The segment at 84-87 (YTSS) is connecting peptide. 2 Beta/gamma crystallin 'Greek key' domains span residues 88 to 128 (HRIR…HVLE) and 129 to 171 (GSWV…RRVM).

This sequence belongs to the beta/gamma-crystallin family.

Functionally, crystallins are the dominant structural components of the vertebrate eye lens. This is Gamma-crystallin A (Cryga) from Rattus norvegicus (Rat).